Reading from the N-terminus, the 64-residue chain is Cytochrome b-c1 complex subunit 9 (64 aa).

Residues 2–21 (VAPTLTARLYSLLFRRTSTF) lie on the Mitochondrial matrix side of the membrane. Residues 22 to 47 (ALTIVVGALFFERAFDQGADAIYEHI) traverse the membrane as a helical segment. Over 48–64 (NEGKLWKHIKHKYENKE) the chain is Mitochondrial intermembrane.

The protein belongs to the UQCR10/QCR9 family. In terms of assembly, component of the ubiquinol-cytochrome c oxidoreductase (cytochrome b-c1 complex, complex III, CIII), a multisubunit enzyme composed of 11 subunits. The complex is composed of 3 respiratory subunits cytochrome b, cytochrome c1 and Rieske protein UQCRFS1, 2 core protein subunits UQCRC1/QCR1 and UQCRC2/QCR2, and 6 low-molecular weight protein subunits UQCRH/QCR6, UQCRB/QCR7, UQCRQ/QCR8, UQCR10/QCR9, UQCR11/QCR10 and subunit 9, the cleavage product of Rieske protein UQCRFS1. The complex exists as an obligatory dimer and forms supercomplexes (SCs) in the inner mitochondrial membrane with NADH-ubiquinone oxidoreductase (complex I, CI) and cytochrome c oxidase (complex IV, CIV), resulting in different assemblies (supercomplex SCI(1)III(2)IV(1) and megacomplex MCI(2)III(2)IV(2)). Interacts with STMP1.

It localises to the mitochondrion inner membrane. Component of the ubiquinol-cytochrome c oxidoreductase, a multisubunit transmembrane complex that is part of the mitochondrial electron transport chain which drives oxidative phosphorylation. The respiratory chain contains 3 multisubunit complexes succinate dehydrogenase (complex II, CII), ubiquinol-cytochrome c oxidoreductase (cytochrome b-c1 complex, complex III, CIII) and cytochrome c oxidase (complex IV, CIV), that cooperate to transfer electrons derived from NADH and succinate to molecular oxygen, creating an electrochemical gradient over the inner membrane that drives transmembrane transport and the ATP synthase. The cytochrome b-c1 complex catalyzes electron transfer from ubiquinol to cytochrome c, linking this redox reaction to translocation of protons across the mitochondrial inner membrane, with protons being carried across the membrane as hydrogens on the quinol. In the process called Q cycle, 2 protons are consumed from the matrix, 4 protons are released into the intermembrane space and 2 electrons are passed to cytochrome c. This chain is Cytochrome b-c1 complex subunit 9 (UQCR10), found in Bos taurus (Bovine).